The primary structure comprises 185 residues: Large ribosomal subunit protein uL22 (185 aa).

The interval 158–185 (AKPREDEPHKKKISKKKLARAKEKMLRE) is disordered. A compositionally biased stretch (basic residues) spans 167–176 (KKKISKKKLA).

Belongs to the universal ribosomal protein uL22 family.

The chain is Large ribosomal subunit protein uL22 (RpL17) from Diaphorina citri (Asian citrus psyllid).